Here is a 1246-residue protein sequence, read N- to C-terminus: Stromal processing peptidase, chloroplastic (1246 aa).

The transit peptide at 1 to 136 (MASFPSPPLA…AKIRRRHVLH (136 aa)) directs the protein to the chloroplast. His228 contributes to the Zn(2+) binding site. Glu231 serves as the catalytic Proton acceptor. His232 serves as a coordination point for Zn(2+). Glu302 is an active-site residue. Residue Glu309 participates in Zn(2+) binding.

This sequence belongs to the peptidase M16 family. Zn(2+) serves as cofactor. As to expression, widely expressed.

The protein localises to the plastid. It is found in the chloroplast stroma. Functionally, cleaves presequences (transit peptides) from chloroplastic protein precursors. Initially recognizes a precursor by binding to the C-terminus of its transit peptide and then removes the transit peptide in a single endoproteolytic step. In a next step, pursues the cleavage of transit peptide to a subfragment form. In Oryza sativa subsp. indica (Rice), this protein is Stromal processing peptidase, chloroplastic.